The chain runs to 190 residues: Putative CRISPR system CMR subunit Cmr7 2 (190 aa).

Belongs to the CRISPR system Cmr7 family. Homodimer.

CRISPR (clustered regularly interspaced short palindromic repeat) is an adaptive immune system that provides protection against mobile genetic elements (viruses, transposable elements and conjugative plasmids). CRISPR clusters contain spacers, sequences complementary to antecedent mobile elements, and target invading nucleic acids. CRISPR clusters are transcribed and processed into CRISPR RNA (crRNA). The chain is Putative CRISPR system CMR subunit Cmr7 2 (cmr7b) from Saccharolobus solfataricus (strain ATCC 35092 / DSM 1617 / JCM 11322 / P2) (Sulfolobus solfataricus).